Reading from the N-terminus, the 251-residue chain is LexA repressor (251 aa).

A DNA-binding region (H-T-H motif) is located at residues 26-46; the sequence is FDEMKDALGLKSKSGIHRLIK. Catalysis depends on for autocatalytic cleavage activity residues Ser-172 and Lys-210.

It belongs to the peptidase S24 family. As to quaternary structure, homodimer.

The catalysed reaction is Hydrolysis of Ala-|-Gly bond in repressor LexA.. Functionally, represses a number of genes involved in the response to DNA damage (SOS response), including recA and lexA. In the presence of single-stranded DNA, RecA interacts with LexA causing an autocatalytic cleavage which disrupts the DNA-binding part of LexA, leading to derepression of the SOS regulon and eventually DNA repair. This is LexA repressor from Rhodospirillum rubrum (strain ATCC 11170 / ATH 1.1.1 / DSM 467 / LMG 4362 / NCIMB 8255 / S1).